We begin with the raw amino-acid sequence, 321 residues long: Manganese-dependent ADP-ribose/CDP-alcohol diphosphatase (321 aa).

Zn(2+) contacts are provided by D25, Q27, D72, N107, H226, H263, and H265.

It belongs to the ADPRibase-Mn family. As to quaternary structure, monomer. Requires Mg(2+) as cofactor.

It carries out the reaction CDP-choline + H2O = phosphocholine + CMP + 2 H(+). It catalyses the reaction ADP-D-ribose + H2O = D-ribose 5-phosphate + AMP + 2 H(+). The catalysed reaction is CDP-glycerol + H2O = sn-glycerol 3-phosphate + CMP + 2 H(+). Hydrolyzes ADP-ribose, IDP-ribose, CDP-glycerol, CDP-choline and CDP-ethanolamine, but not other non-reducing ADP-sugars or CDP-glucose. This Oryza sativa subsp. japonica (Rice) protein is Manganese-dependent ADP-ribose/CDP-alcohol diphosphatase.